A 669-amino-acid polypeptide reads, in one-letter code: Trissin receptor (669 aa).

Residues 1–15 (MIMTMMQTVRAWQQE) are compositionally biased toward polar residues. Residues 1 to 90 (MIMTMMQTVR…PTGQQPPRLP (90 aa)) are disordered. The Extracellular portion of the chain corresponds to 1-184 (MIMTMMQTVR…EYIFDRTDVR (184 aa)). Positions 55-74 (NQNNGSPNSSPNQSTSAFRQ) are enriched in low complexity. N-linked (GlcNAc...) asparagine glycosylation is present at Asn66. Pro residues predominate over residues 79–89 (HPPTGQQPPRL). Residues Asn120 and Asn130 are each glycosylated (N-linked (GlcNAc...) asparagine). The helical transmembrane segment at 185-205 (IIFITLYTLVFCCCFFGNLLV) threads the bilayer. The Cytoplasmic segment spans residues 206 to 217 (ILVVTLSRRLRS). The chain crosses the membrane as a helical span at residues 218–238 (ITNFFLANLAFADFCVGLFCV). The Extracellular portion of the chain corresponds to 239–269 (MQNLSIYLIESWVFGEFLCRMYQFVHSLSYT). N-linked (GlcNAc...) asparagine glycosylation occurs at Asn241. Cys257 and Cys340 form a disulfide bridge. A helical membrane pass occupies residues 270 to 290 (ASIFILVVICMERYFAIVHPI). Residues 291 to 302 (TCKQILTAARLR) are Cytoplasmic-facing. Residues 303–323 (MVIVTVWITSAVYSTPKFVFS) traverse the membrane as a helical segment. Topologically, residues 324–350 (KTIKNIHTQDGQEEEICVLDREMFNSK) are extracellular. The chain crosses the membrane as a helical span at residues 351-371 (LLDMINFVLLYVMPLLVMTVL). Residues 372-552 (YSKIAIALWR…SSNVLRARRG (181 aa)) lie on the Cytoplasmic side of the membrane. The segment covering 390 to 401 (VVQHQHQQPQQP) has biased composition (low complexity). Disordered regions lie at residues 390–481 (VVQH…RGVS) and 515–537 (AHHQ…AGAT). Positions 414–429 (MYHHHPHHHHHHHQHH) are enriched in basic residues. Over residues 441–454 (VGVGLGGGGGGGPG) the composition is skewed to gly residues. The span at 455-470 (PSLASGGSSTTSLSRK) shows a compositional bias: low complexity. Residues 524 to 534 (SVGGGSGGAGA) show a composition bias toward gly residues. A helical transmembrane segment spans residues 553-573 (VVRMLIIFVLTFALCNLPYHA). Residues 574–595 (RKMWQYWSRSYRGDSNFNALLT) lie on the Extracellular side of the membrane. Residues 596 to 616 (PLTFLVTYFNSGVNPLLYAFL) traverse the membrane as a helical segment. Over 617–669 (SRNFRKGMKELLLCSWKKGKGKSSSNSSMHHKRKALQTHSLPTDTTHIGNEQL) the chain is Cytoplasmic. The interval 635-669 (GKGKSSSNSSMHHKRKALQTHSLPTDTTHIGNEQL) is disordered. A compositionally biased stretch (polar residues) spans 653–669 (QTHSLPTDTTHIGNEQL).

This sequence belongs to the G-protein coupled receptor 1 family.

Its subcellular location is the cell membrane. In terms of biological role, G-protein coupled receptor which is activated by the Trissin peptide in vitro, leading to increased intracellular calcium ion levels. In Drosophila melanogaster (Fruit fly), this protein is Trissin receptor.